Here is a 443-residue protein sequence, read N- to C-terminus: Amino-acid acetyltransferase (443 aa).

The N-acetyltransferase domain maps to 296-436 (EQIRRATIND…KMYNYQRRSK (141 aa)).

It belongs to the acetyltransferase family. ArgA subfamily. As to quaternary structure, homohexamer.

It localises to the cytoplasm. It catalyses the reaction L-glutamate + acetyl-CoA = N-acetyl-L-glutamate + CoA + H(+). The protein operates within amino-acid biosynthesis; L-arginine biosynthesis; N(2)-acetyl-L-ornithine from L-glutamate: step 1/4. The polypeptide is Amino-acid acetyltransferase (Salmonella arizonae (strain ATCC BAA-731 / CDC346-86 / RSK2980)).